The following is a 1958-amino-acid chain: Echinoderm microtubule-associated protein-like 6 (1958 aa).

10 WD repeats span residues 59-100 (GHND…TVSL), 104-145 (VHTH…LLAS), 148-187 (GHSD…LTAK), 195-233 (GDLQ…RTIQ), 235-273 (AHSA…TKID), 280-321 (GYKG…LILQ), 323-362 (HCEG…LIAR), 364-403 (NMEE…EVVH), 406-445 (DRKE…KKIG), and 561-601 (GHSA…VSNG). Residues 603 to 626 (LETAPQEGGADSYSEESDSDLSDV) form a disordered region. Positions 615 to 626 (YSEESDSDLSDV) are enriched in acidic residues. 10 WD repeats span residues 725–766 (GHDD…CLSL), 770–811 (QHQR…KIAT), 814–853 (GHKD…FTSK), 861–900 (GKLE…KTVK), 901–940 (AHDG…KTYA), 996–1035 (HMEG…RMLA), 1038–1077 (KLKK…DMVS), 1080–1120 (HRKE…RVGI), 1191–1230 (SDIT…QHAR), and 1236–1276 (GHSA…TQES). The span at 1322 to 1337 (KPHQQLKEVSVEERPP) shows a compositional bias: basic and acidic residues. Positions 1322 to 1353 (KPHQQLKEVSVEERPPVSRAAPQPEKLQKNNI) are disordered. 10 WD repeats span residues 1412 to 1456 (EHTD…TLSM), 1460 to 1501 (FHSK…KVAS), 1504 to 1543 (GHLE…LLYK), 1553 to 1591 (AKMQ…RLVA), 1593 to 1638 (AHTG…CRAF), 1685 to 1724 (HMEG…LLNK), 1726 to 1767 (SLGH…GKKR), 1768 to 1807 (DRKS…NLNR), 1880 to 1919 (ADKA…KFAK), and 1925 to 1958 (GHSA…WRCL).

The protein belongs to the WD repeat EMAP family.

It localises to the cytoplasm. The protein resides in the cytoskeleton. Its function is as follows. May modify the assembly dynamics of microtubules, such that microtubules are slightly longer, but more dynamic. This is Echinoderm microtubule-associated protein-like 6 (EML6) from Homo sapiens (Human).